The following is a 163-amino-acid chain: uncharacterized protein (163 aa).

Positions 1–10 (MGVPRAREGR) are enriched in basic and acidic residues. The disordered stretch occupies residues 1-163 (MGVPRAREGR…WSFTPLRWGS (163 aa)).

This is an uncharacterized protein from Homo sapiens (Human).